We begin with the raw amino-acid sequence, 541 residues long: Light-independent protochlorophyllide reductase subunit B (541 aa).

Residue Asp36 participates in [4Fe-4S] cluster binding. Residue Asp290 is the Proton donor of the active site. 425–426 is a substrate binding site; it reads GL.

It belongs to the ChlB/BchB/BchZ family. As to quaternary structure, protochlorophyllide reductase is composed of three subunits; ChlL, ChlN and ChlB. Forms a heterotetramer of two ChlB and two ChlN subunits. [4Fe-4S] cluster is required as a cofactor.

It carries out the reaction chlorophyllide a + oxidized 2[4Fe-4S]-[ferredoxin] + 2 ADP + 2 phosphate = protochlorophyllide a + reduced 2[4Fe-4S]-[ferredoxin] + 2 ATP + 2 H2O. The protein operates within porphyrin-containing compound metabolism; chlorophyll biosynthesis (light-independent). Its function is as follows. Component of the dark-operative protochlorophyllide reductase (DPOR) that uses Mg-ATP and reduced ferredoxin to reduce ring D of protochlorophyllide (Pchlide) to form chlorophyllide a (Chlide). This reaction is light-independent. The NB-protein (ChlN-ChlB) is the catalytic component of the complex. The polypeptide is Light-independent protochlorophyllide reductase subunit B (Synechococcus sp. (strain CC9902)).